The following is a 520-amino-acid chain: Nucleobase-ascorbate transporter 1 (520 aa).

Helical transmembrane passes span 36-56 (YILM…AMGG), 64-84 (VIQT…LFGT), 86-106 (LPAV…IIND), 129-149 (ALIV…WGLF), 150-170 (SRFF…LGMF), 174-194 (FPQL…VIGL), 213-233 (FPIL…TASG), 279-299 (FAMM…YIAA), 362-382 (GFMI…SIPV), 384-404 (IYAA…LSFL), 415-435 (LMIT…FAQY), and 453-473 (AFLN…AVFM).

Belongs to the nucleobase:cation symporter-2 (NCS2) (TC 2.A.40) family. In terms of tissue distribution, expressed in cotyledons 4 days after imbibition (DAI). Expressed in the minor and major veins of cotyledons and leaves, in the shoot apex and pedicels. Expressed in the root meristems, root tips and lateral root primordia.

The protein resides in the membrane. This is Nucleobase-ascorbate transporter 1 (NAT1) from Arabidopsis thaliana (Mouse-ear cress).